A 1224-amino-acid chain; its full sequence is A disintegrin and metalloproteinase with thrombospondin motifs 16 (1224 aa).

Residues 1-24 (MKPRARGWRGLAALWMLLAQVAEQ) form the signal peptide. A propeptide spanning residues 25 to 279 (APACAMGPAA…EYKSCLRHKR (255 aa)) is cleaved from the precursor. Positions 31 to 53 (GPAAAAPGSPSVPRPPPPAERPG) are disordered. A compositionally biased stretch (pro residues) spans 40 to 50 (PSVPRPPPPAE). Asn-156 is a glycosylation site (N-linked (GlcNAc...) asparagine). Positions 247–254 (HFCGRRKK) match the Cysteine switch motif. Cys-249 is a Zn(2+) binding site. In terms of domain architecture, Peptidase M12B spans 290-495 (LNVETLVVVD…AQAICLADQP (206 aa)). Asn-310 is a glycosylation site (N-linked (GlcNAc...) asparagine). Disulfide bonds link Cys-366–Cys-417, Cys-392–Cys-399, Cys-411–Cys-490, Cys-450–Cys-474, Cys-518–Cys-543, Cys-529–Cys-550, Cys-538–Cys-569, Cys-563–Cys-574, Cys-598–Cys-635, Cys-602–Cys-640, and Cys-613–Cys-625. His-433 serves as a coordination point for Zn(2+). The active site involves Glu-434. 2 residues coordinate Zn(2+): His-437 and His-443. Positions 496-585 (KPVKEYKYPE…KYGDEGPKPT (90 aa)) constitute a Disintegrin domain. In terms of domain architecture, TSP type-1 1 spans 586–641 (HGHWSDWSSWSPCSRTCGGGVSHRSRLCTNPKPSHGGKFCEGSTRTLKLCNSQKCP). 5 N-linked (GlcNAc...) asparagine glycosylation sites follow: Asn-741, Asn-780, Asn-835, Asn-905, and Asn-935. The segment at 747-873 (IHRGLYTKHH…KQPPAQPSYT (127 aa)) is spacer. TSP type-1 domains follow at residues 874 to 922 (WAIV…LVPC), 927 to 987 (CPPS…QSCP), 988 to 1048 (PAWS…QRCH), 1051 to 1115 (KKLQ…LPCP), and 1127 to 1181 (RGSW…HFCP). Intrachain disulfides connect Cys-939/Cys-981, Cys-943/Cys-986, and Cys-954/Cys-970. A PLAC domain is found at 1186–1223 (KDAFCKDYFHWCYLVPQHGMCSHKFYGKQCCKTCSKSN).

Zn(2+) is required as a cofactor. The precursor is cleaved by a furin endopeptidase. Post-translationally, glycosylated. Can be O-fucosylated by POFUT2 on a serine or a threonine residue found within the consensus sequence C1-X(2)-(S/T)-C2-G of the TSP type-1 repeat domains where C1 and C2 are the first and second cysteine residue of the repeat, respectively. Fucosylated repeats can then be further glycosylated by the addition of a beta-1,3-glucose residue by the glucosyltransferase, B3GALTL. Fucosylation mediates the efficient secretion of ADAMTS family members. Can also be C-glycosylated with one or two mannose molecules on tryptophan residues within the consensus sequence W-X-X-W of the TPRs, and N-glycosylated. These other glycosylations can also facilitate secretion. As to expression, expressed in fetal lung and kidney and in adult prostate and ovary.

It localises to the secreted. Its subcellular location is the extracellular space. It is found in the extracellular matrix. The protein is A disintegrin and metalloproteinase with thrombospondin motifs 16 (ADAMTS16) of Homo sapiens (Human).